The sequence spans 457 residues: Bifunctional protein GlmU (457 aa).

Positions 1 to 230 (MPLSLPLHIV…PREVEGVNDL (230 aa)) are pyrophosphorylase. UDP-N-acetyl-alpha-D-glucosamine contacts are provided by residues 12-15 (LAAG), lysine 26, glutamine 78, 83-84 (GT), 105-107 (YGD), glycine 140, glutamate 155, asparagine 170, and asparagine 228. Residue aspartate 107 participates in Mg(2+) binding. Mg(2+) is bound at residue asparagine 228. The linker stretch occupies residues 231 to 251 (WQLTQLERTWQIRAARALCLQ). Residues 252–457 (GARVADPARL…DGWQRPKKKT (206 aa)) are N-acetyltransferase. 2 residues coordinate UDP-N-acetyl-alpha-D-glucosamine: arginine 334 and lysine 352. The active-site Proton acceptor is the histidine 364. The UDP-N-acetyl-alpha-D-glucosamine site is built by tyrosine 367 and asparagine 378. Acetyl-CoA contacts are provided by residues alanine 381, 387–388 (NY), serine 406, alanine 424, and arginine 441.

It in the N-terminal section; belongs to the N-acetylglucosamine-1-phosphate uridyltransferase family. This sequence in the C-terminal section; belongs to the transferase hexapeptide repeat family. In terms of assembly, homotrimer. Requires Mg(2+) as cofactor.

Its subcellular location is the cytoplasm. The catalysed reaction is alpha-D-glucosamine 1-phosphate + acetyl-CoA = N-acetyl-alpha-D-glucosamine 1-phosphate + CoA + H(+). It catalyses the reaction N-acetyl-alpha-D-glucosamine 1-phosphate + UTP + H(+) = UDP-N-acetyl-alpha-D-glucosamine + diphosphate. The protein operates within nucleotide-sugar biosynthesis; UDP-N-acetyl-alpha-D-glucosamine biosynthesis; N-acetyl-alpha-D-glucosamine 1-phosphate from alpha-D-glucosamine 6-phosphate (route II): step 2/2. Its pathway is nucleotide-sugar biosynthesis; UDP-N-acetyl-alpha-D-glucosamine biosynthesis; UDP-N-acetyl-alpha-D-glucosamine from N-acetyl-alpha-D-glucosamine 1-phosphate: step 1/1. It participates in bacterial outer membrane biogenesis; LPS lipid A biosynthesis. Functionally, catalyzes the last two sequential reactions in the de novo biosynthetic pathway for UDP-N-acetylglucosamine (UDP-GlcNAc). The C-terminal domain catalyzes the transfer of acetyl group from acetyl coenzyme A to glucosamine-1-phosphate (GlcN-1-P) to produce N-acetylglucosamine-1-phosphate (GlcNAc-1-P), which is converted into UDP-GlcNAc by the transfer of uridine 5-monophosphate (from uridine 5-triphosphate), a reaction catalyzed by the N-terminal domain. The sequence is that of Bifunctional protein GlmU from Xylella fastidiosa (strain M12).